Here is a 292-residue protein sequence, read N- to C-terminus: Transcription factor-like protein DPA (292 aa).

Residues Met-1–Thr-25 form a disordered region. Residues Gly-51–Pro-135 mediate DNA binding. Residues Asn-101–Pro-135 carry the DEF box motif. Residues Leu-163 to Val-184 are a coiled coil. The tract at residues Gln-246–Gly-280 is disordered. A compositionally biased stretch (low complexity) spans Ser-252 to Gly-280.

The protein belongs to the E2F/DP family. Heterodimer with E2F. Interacts preferentially with E2FA and E2FB, but also with E2FC. As to expression, strongly expressed in the actively dividing tissues of the shoot apical meristem, young leaf primordia, the vascular tissues of the maturing leaf primordia and axillary buds.

It is found in the cytoplasm. The protein resides in the nucleus. Involved in the regulation of the G1/S transition. Increases the DNA binding and the transactivation activities of E2F proteins after heterodimerization. The complex DPA/E2FA promotes cell division and acts as a regulator of the endocycle. Positively regulates the activity of S phase-specific genes. This is Transcription factor-like protein DPA (DPA) from Arabidopsis thaliana (Mouse-ear cress).